Consider the following 686-residue polypeptide: Amphiphysin (686 aa).

Coiled coils occupy residues 10-83 (AKNV…SLHE) and 144-191 (DYDS…QEEL). The region spanning 24–240 (VLQKLGKADE…MTKLGDQHAD (217 aa)) is the BAR domain. Disordered stretches follow at residues 244–314 (SIQG…PTKE), 421–441 (AETE…ATAA), and 483–597 (VEEA…AGAV). Ser252 carries the phosphoserine modification. Thr260 carries the post-translational modification Phosphothreonine. Residues 261 to 274 (PSPPEEPSPLPSPT) are compositionally biased toward pro residues. Phosphoserine is present on residues Ser262, Ser268, Ser272, and Ser276. Residue Thr280 is modified to Phosphothreonine. The span at 424 to 441 (EQALPTEPQAEEPPATAA) shows a compositional bias: low complexity. At Ser500 the chain carries Phosphoserine. Over residues 541-562 (SNHEGEGEHQETATGTEPREAA) the composition is skewed to basic and acidic residues. The SH3 domain occupies 613-686 (GFLYKVETLH…FPENFTRRLE (74 aa)). Phosphoserine is present on Ser629.

Heterodimer with BIN1. Binds SH3GLB1. Interacts with REPS1 and SGIP1. Binds AP2A2. Interacts with AP2B1. Interacts with DNM1 and SYNJ1.

It localises to the cytoplasmic vesicle. The protein resides in the secretory vesicle. Its subcellular location is the synaptic vesicle membrane. The protein localises to the cytoplasm. It is found in the cytoskeleton. Functionally, may participate in mechanisms of regulated exocytosis in synapses and certain endocrine cell types. May control the properties of the membrane associated cytoskeleton. The polypeptide is Amphiphysin (Amph) (Mus musculus (Mouse)).